Consider the following 913-residue polypeptide: Anoctamin-5 (913 aa).

Topologically, residues 1 to 299 are cytoplasmic; the sequence is MGDPDLLEVL…DLIKNYYGEK (299 aa). Residues 300–320 traverse the membrane as a helical segment; that stretch reads IGIYFVFLGFYTEMLFFAAVV. The Extracellular portion of the chain corresponds to 321-380; it reads GLACFIYGLLSMEHNTSSTEICDPEIGGQMIMCPLCDQVCDYWRLNSTCLASKFSHLFDN. 3 N-linked (GlcNAc...) asparagine glycosylation sites follow: N335, N366, and N380. A helical membrane pass occupies residues 381 to 401; the sequence is ESTVFFAIFMGIWVTLFLEFW. Over 402–462 the chain is Cytoplasmic; sequence KQRQARLEYE…YTRIPWYFLS (61 aa). Residues 463 to 483 form a helical membrane-spanning segment; that stretch reads GATVTLWMSLVVTSMVAVIVY. The Extracellular segment spans residues 484-511; sequence RLSVFATFASFMESDASLKQVKSFLTPQ. Residues 512–532 form a helical membrane-spanning segment; the sequence is ITTSLTGSCLNFIVILILNFF. Topologically, residues 533-557 are cytoplasmic; sequence YEKISAWITKMEIPRTYQEYESSLT. A helical membrane pass occupies residues 558-578; that stretch reads LKMFLFQFVNFYSSCFYVAFF. The Extracellular segment spans residues 579–679; the sequence is KGKFVGYPGK…FYEYLETVTQ (101 aa). The helical transmembrane segment at 680 to 700 threads the bilayer; sequence FGFVTLFVASFPLAPLLALIN. The Cytoplasmic portion of the chain corresponds to 701-732; that stretch reads NIVEIRVDAWKLTTQYRRTVASKAHSIGVWQD. The chain crosses the membrane as a helical span at residues 733-753; that stretch reads ILYGMAVLSVATNAFIVAFTS. Residues 754–834 lie on the Extracellular side of the membrane; the sequence is DIIPRLVYYY…FWHVLAAKMT (81 aa). Residues N768, N778, and N791 are each glycosylated (N-linked (GlcNAc...) asparagine). Residues 835 to 855 form a helical membrane-spanning segment; sequence FIIVMEHVVFLVKFLLAWMIP. The Cytoplasmic portion of the chain corresponds to 856-913; sequence DVPKDVVERIKREKLMTIKILHDFELNKLKENLGINSNEFAKHVMIEENKAQLAKSTL.

It belongs to the anoctamin family. As to expression, highly expressed in brain, heart, kidney, lung, and skeletal muscle. Weakly expressed in bone marrow, fetal liver, placenta, spleen, thymus, osteoblasts and periodontal ligament cells.

The protein localises to the endoplasmic reticulum membrane. Its subcellular location is the cell membrane. Its function is as follows. Plays a role in plasma membrane repair in a process involving annexins. Does not exhibit calcium-activated chloride channel (CaCC) activity. In Homo sapiens (Human), this protein is Anoctamin-5 (ANO5).